We begin with the raw amino-acid sequence, 146 residues long: Putative esterase DR_2321 (146 aa).

This sequence belongs to the thioesterase PaaI family.

This Deinococcus radiodurans (strain ATCC 13939 / DSM 20539 / JCM 16871 / CCUG 27074 / LMG 4051 / NBRC 15346 / NCIMB 9279 / VKM B-1422 / R1) protein is Putative esterase DR_2321.